The following is a 479-amino-acid chain: Calcium/calmodulin-dependent protein kinase type II delta chain (479 aa).

The Protein kinase domain maps to Y14–I272. Residues L20–V28 and K43 each bind ATP. Residue D136 is the Proton acceptor of the active site. T287 is modified (phosphothreonine). A phosphoserine mark is found at S315 and S319. T337 carries the post-translational modification Phosphothreonine.

This sequence belongs to the protein kinase superfamily. CAMK Ser/Thr protein kinase family. CaMK subfamily. As to quaternary structure, CAMK2 is composed of four different chains: alpha, beta, gamma, and delta. The different isoforms assemble into homo- or heteromultimeric holoenzymes composed of 8 to 12 subunits.

The enzyme catalyses L-seryl-[protein] + ATP = O-phospho-L-seryl-[protein] + ADP + H(+). It catalyses the reaction L-threonyl-[protein] + ATP = O-phospho-L-threonyl-[protein] + ADP + H(+). With respect to regulation, autophosphorylation of CAMK2 plays an important role in the regulation of the kinase activity. In terms of biological role, caM-kinase II (CAMK2) is a prominent kinase in the central nervous system. This Gallus gallus (Chicken) protein is Calcium/calmodulin-dependent protein kinase type II delta chain (CAMK2D).